Reading from the N-terminus, the 90-residue chain is Small ribosomal subunit protein uS17 (90 aa).

It belongs to the universal ribosomal protein uS17 family. In terms of assembly, part of the 30S ribosomal subunit.

One of the primary rRNA binding proteins, it binds specifically to the 5'-end of 16S ribosomal RNA. The protein is Small ribosomal subunit protein uS17 of Gluconobacter oxydans (strain 621H) (Gluconobacter suboxydans).